The following is a 505-amino-acid chain: Glucose-6-phosphate 1-dehydrogenase (505 aa).

Position 2 is an N-acetylserine (S2). Residues 18 to 25 (GASGDLAK) and R52 contribute to the NADP(+) site. S142 carries the post-translational modification Phosphoserine. Y145 bears the Phosphotyrosine mark. K157 lines the NADP(+) pocket. Residues K157, 187–191 (HYLGK), E225, and D244 contribute to the D-glucose 6-phosphate site. Residue H249 is the Proton acceptor of the active site. NADP(+) is bound at residue R340. Residue K343 participates in D-glucose 6-phosphate binding. Residues K349, R353, and R375 each contribute to the NADP(+) site. Q377 is a binding site for D-glucose 6-phosphate. NADP(+) contacts are provided by residues 383-385 (YLK) and R470.

It belongs to the glucose-6-phosphate dehydrogenase family.

The enzyme catalyses D-glucose 6-phosphate + NADP(+) = 6-phospho-D-glucono-1,5-lactone + NADPH + H(+). It participates in carbohydrate degradation; pentose phosphate pathway; D-ribulose 5-phosphate from D-glucose 6-phosphate (oxidative stage): step 1/3. Its function is as follows. Catalyzes the rate-limiting step of the oxidative pentose-phosphate pathway, which represents a route for the dissimilation of carbohydrates besides glycolysis. The main function of this enzyme is to provide reducing power (NADPH) and pentose phosphates for fatty acid and nucleic acid synthesis. The chain is Glucose-6-phosphate 1-dehydrogenase (ZWF1) from Saccharomyces cerevisiae (strain ATCC 204508 / S288c) (Baker's yeast).